Here is a 485-residue protein sequence, read N- to C-terminus: MSGVVRSSPGSSQPPPPPPHHPPSSPVPVTSTPVIPPIRRHLAFASTKPPFHPSDDYHRFNPSSLSNNNDRSFVHGCGVVDREEDAVVVRSPSRKRKATMDMVVAPSNNGFTSSGFTNIPSSPCQTPRKGGRVNIKSKAKGNKSTPQTPISTNAGSPITLTPSGSCRYDSSLGLLTKKFVNLIKQAKDGMLDLNKAAETLEVQKRRIYDITNVLEGIDLIEKPFKNRILWKGVDACPGDEDADVSVLQLQAEIENLALEEQALDNQIRQTEERLRDLSENEKNQKWLFVTEEDIKSLPGFQNQTLIAVKAPHGTTLEVPDPDEAADHPQRRYRIILRSTMGPIDVYLVSEFEGKFEDTNGSGAAPPACLPIASSSGSTGHHDIEALTVDNPETAIVSHDHPHPQPGDTSDLNYLQEQVGGMLKITPSDVENDESDYWLLSNAEISMTDIWKTDSGIDWDYGIADVSTPPPGMGEIAPTAVDSTPR.

Positions 1–11 are enriched in low complexity; it reads MSGVVRSSPGS. Disordered regions lie at residues 1–69 and 114–159; these read MSGV…SNNN and SGFT…SPIT. Residues 12-26 show a composition bias toward pro residues; it reads SQPPPPPPHHPPSSP. Over residues 114–125 the composition is skewed to polar residues; that stretch reads SGFTNIPSSPCQ. Basic residues predominate over residues 129–141; the sequence is KGGRVNIKSKAKG. Residues 142–159 are compositionally biased toward polar residues; sequence NKSTPQTPISTNAGSPIT. Residues 167–232 mediate DNA binding; it reads RYDSSLGLLT…PFKNRILWKG (66 aa). The stretch at 245 to 286 forms a coiled coil; the sequence is SVLQLQAEIENLALEEQALDNQIRQTEERLRDLSENEKNQKW. Positions 249–277 are leucine-zipper; it reads LQAEIENLALEEQALDNQIRQTEERLRDL. A retinoblastoma protein binding region spans residues 435-450; it reads DYWLLSNAEISMTDIW.

Belongs to the E2F/DP family. Heterodimer with DP proteins. Interacts (via dimerization domain) preferentially with DPA, but also with DPB. Interacts with maize retinoblastoma-related protein RBR1. No interaction with E2FD. In terms of tissue distribution, highly expressed in the shoot apical meristem, emerging leaf primordia, and vascular tissues of young leaf primordia. Expressed in flowers, in epidermis and cortex of hypocotyls, and at lower levels in leaves.

It is found in the cytoplasm. Its subcellular location is the nucleus. Transcription activator that binds DNA cooperatively with DP proteins through the E2 recognition site, 5'-TTTC[CG]CGC-3' found in the promoter region of a number of genes whose products are involved in cell cycle regulation or in DNA replication. The binding of retinoblastoma-related proteins represses transactivation. Regulates gene expression both positively and negatively. Activates the expression of E2FB. Involved in the control of cell-cycle progression from G1 to S phase. Stimulates cell proliferation and delays differentiation. This Arabidopsis thaliana (Mouse-ear cress) protein is Transcription factor E2FA (E2FA).